A 279-amino-acid chain; its full sequence is Large ribosomal subunit protein uL2 (279 aa).

Disordered stretches follow at residues 29 to 49 (PVKQ…NGRV) and 202 to 279 (NASI…KKKG). Residues 36-49 (GKSSSGGRNNNGRV) are compositionally biased toward low complexity. The segment covering 209–220 (GRSRWLGRRPHN) has biased composition (basic residues).

This sequence belongs to the universal ribosomal protein uL2 family. Part of the 50S ribosomal subunit. Forms a bridge to the 30S subunit in the 70S ribosome.

Functionally, one of the primary rRNA binding proteins. Required for association of the 30S and 50S subunits to form the 70S ribosome, for tRNA binding and peptide bond formation. It has been suggested to have peptidyltransferase activity; this is somewhat controversial. Makes several contacts with the 16S rRNA in the 70S ribosome. This is Large ribosomal subunit protein uL2 from Beijerinckia indica subsp. indica (strain ATCC 9039 / DSM 1715 / NCIMB 8712).